Reading from the N-terminus, the 94-residue chain is Small ribosomal subunit protein uS19c (94 aa).

This sequence belongs to the universal ribosomal protein uS19 family.

Its subcellular location is the plastid. The protein resides in the chloroplast. Functionally, protein S19 forms a complex with S13 that binds strongly to the 16S ribosomal RNA. The protein is Small ribosomal subunit protein uS19c of Pleurastrum terricola (Filamentous green alga).